The chain runs to 264 residues: Acid phosphatase (264 aa).

The first 28 residues, 1-28, serve as a signal peptide directing secretion; the sequence is MIKVPRFICMIALTSGILASGLSQSVSA.

Belongs to the class A bacterial acid phosphatase family. Mg(2+) is required as a cofactor. It depends on Zn(2+) as a cofactor.

Its subcellular location is the periplasm. The enzyme catalyses a phosphate monoester + H2O = an alcohol + phosphate. This Zymomonas mobilis subsp. mobilis (strain ATCC 31821 / ZM4 / CP4) protein is Acid phosphatase (phoC).